We begin with the raw amino-acid sequence, 674 residues long: MDTPQKSITQIGTPISKSRFEDSPVFNYINSLSPIRPVRSIPNPNQFSSLNFTSPPSVFTSPHLTSSHKESRFFKTHNSSSSDPTNSVESQEDESTSHEEVPAEGEDTKGLNIDDCMREEASVETNLDDSVASPCGGNTTDLSLVPYAPTRGEDGSCEDNGMELQKMHDNVQGKTETPDWESLIADASELLIFDSPDASEAFRCFMMQRASNSEARFRNGVEKQTMQHDSNKEPESANAIPYEAVSLLHRGIRRRCLDFEMPGNKQTSSENNTAACESSSRCVVPSIGLHLNAILMSSKDCKTNVTQDYSCSANIQVGLQRSISTLQDSLDQTENEIREDADQDVPVEPALQELNLSSPKKKRVKLDSGEGESCKRCNCKKSKCLKLYCECFAAGVYCIEPCSCIDCFNKPIHEDVVLATRKQIESRNPLAFAPKVIRNSDSVQETGDDASKTPASARHKRGCNCKKSNCLKKYCECYQGGVGCSINCRCEGCKNAFGRKDGSSIDMEAEQEEENETSEKSRTAKSQQNTEVLMRKDMSSALPTTPTPIYRPELVQLPFSSSKNRMPPPQSLLGGGSSSGIFNSQYLRKPDISLSQSRIEKSFETVAVDGAEQMPEILIHSPIPNIKSVSPNGKRVSPPHMESSSSGSILGRRNGGRKLILQSIPSFPSLTPQH.

Polar residues-rich tracts occupy residues 1–16 and 76–89; these read MDTP…TPIS and THNS…NSVE. Disordered stretches follow at residues 1–20 and 69–113; these read MDTP…KSRF and KESR…GLNI. A compositionally biased stretch (basic and acidic residues) spans 95–109; that stretch reads STSHEEVPAEGEDTK. A CRC domain is found at 373 to 498; it reads SCKRCNCKKS…RCEGCKNAFG (126 aa). Disordered stretches follow at residues 504-529 and 623-655; these read SIDM…SQQN and IPNI…RRNG. Residues 507–516 are compositionally biased toward acidic residues; the sequence is MEAEQEEENE.

This sequence belongs to the lin-54 family. In terms of tissue distribution, ubiquitous but expressed mostly in all the aerial organs with highest expression in flowers.

It is found in the nucleus. In terms of biological role, plays a role in development of both male and female reproductive tissues. This Arabidopsis thaliana (Mouse-ear cress) protein is Protein tesmin/TSO1-like CXC 2 (TCX2).